Consider the following 237-residue polypeptide: MKPETFYNLLAEQNLPLSDQQKEQFERYFELLVEWNEKINLTAITDKEEVYLKHFYDSIAPILQGLIPNETIKLLDIGAGAGFPSLPMKILYPELDVTIIDSLNKRINFLQLLAQELDLNGVHFYHGRAEDFAQDKNFRAQYDFVTARAVARMQVLSELTIPYLKVGGKLLALKASNAPEELLEAKNALNLLFSKVEDNLSYALPNRDPRYITVVEKKKETPNKYPRKAGMPNKRPL.

Residues glycine 78, phenylalanine 83, 129 to 130 (AE), and arginine 148 contribute to the S-adenosyl-L-methionine site. The segment at 218–237 (KKETPNKYPRKAGMPNKRPL) is disordered.

It belongs to the methyltransferase superfamily. RNA methyltransferase RsmG family.

It localises to the cytoplasm. Its function is as follows. Specifically methylates the N7 position of a guanine in 16S rRNA. This is Ribosomal RNA small subunit methyltransferase G from Streptococcus pneumoniae (strain JJA).